A 311-amino-acid polypeptide reads, in one-letter code: tRNA-cytidine(32) 2-sulfurtransferase (311 aa).

A PP-loop motif motif is present at residues 47–52 (SGGKDS). Residues Cys122, Cys125, and Cys213 each contribute to the [4Fe-4S] cluster site.

It belongs to the TtcA family. Homodimer. Mg(2+) is required as a cofactor. The cofactor is [4Fe-4S] cluster.

It localises to the cytoplasm. The enzyme catalyses cytidine(32) in tRNA + S-sulfanyl-L-cysteinyl-[cysteine desulfurase] + AH2 + ATP = 2-thiocytidine(32) in tRNA + L-cysteinyl-[cysteine desulfurase] + A + AMP + diphosphate + H(+). The protein operates within tRNA modification. Its function is as follows. Catalyzes the ATP-dependent 2-thiolation of cytidine in position 32 of tRNA, to form 2-thiocytidine (s(2)C32). The sulfur atoms are provided by the cysteine/cysteine desulfurase (IscS) system. In Pectobacterium atrosepticum (strain SCRI 1043 / ATCC BAA-672) (Erwinia carotovora subsp. atroseptica), this protein is tRNA-cytidine(32) 2-sulfurtransferase.